A 236-amino-acid polypeptide reads, in one-letter code: Proliferating cell nuclear antigen (236 aa).

Residues 31-50 (RCDRNISMGMNLNNMAKMLK) mediate DNA binding.

Belongs to the PCNA family.

The protein localises to the nucleus. This protein is an auxiliary protein of DNA polymerase delta and is involved in the control of eukaryotic DNA replication by increasing the polymerase's processibility during elongation of the leading strand. This chain is Proliferating cell nuclear antigen, found in Glycine max (Soybean).